The chain runs to 171 residues: Ribosome maturation factor RimM (171 aa).

A PRC barrel domain is found at 97 to 170 (EGEYYYHEII…LVTIHVMEGL (74 aa)).

The protein belongs to the RimM family. As to quaternary structure, binds ribosomal protein uS19.

It localises to the cytoplasm. Functionally, an accessory protein needed during the final step in the assembly of 30S ribosomal subunit, possibly for assembly of the head region. Essential for efficient processing of 16S rRNA. May be needed both before and after RbfA during the maturation of 16S rRNA. It has affinity for free ribosomal 30S subunits but not for 70S ribosomes. The sequence is that of Ribosome maturation factor RimM from Bacillus cereus (strain ZK / E33L).